The following is a 630-amino-acid chain: Putative lipase atg15 (630 aa).

The Cytoplasmic portion of the chain corresponds to 1 to 20 (MKSSQRRIKRHAMRDMSIST). A helical; Signal-anchor for type II membrane protein membrane pass occupies residues 21-40 (LLLSVVLLPSVVSANDHVYF). At 41 to 630 (NPPSPGSPFL…WGSDIEHYEI (590 aa)) the chain is on the lumenal side. N-linked (GlcNAc...) asparagine glycans are attached at residues Asn200, Asn222, Asn280, and Asn304. Residue Ser320 is the Charge relay system of the active site. Residue Asn466 is glycosylated (N-linked (GlcNAc...) asparagine). The segment covering 577–589 (SVTAPPFSTSTSS) has biased composition (polar residues). The disordered stretch occupies residues 577–599 (SVTAPPFSTSTSSDHVRADHSIG).

It belongs to the AB hydrolase superfamily. Lipase family. Binds to both phosphatidylinositol (PI) and phosphatidylinositol 3,5-bisphosphate (PIP2).

It is found in the endosome. It localises to the multivesicular body membrane. The protein localises to the prevacuolar compartment membrane. It carries out the reaction a triacylglycerol + H2O = a diacylglycerol + a fatty acid + H(+). Lipase which is essential for lysis of subvacuolar cytoplasm to vacuole targeted bodies and intravacuolar autophagic bodies. Involved in the lysis of intravacuolar multivesicular body (MVB) vesicles. The intravacuolar membrane disintegration by atg15 is critical to life span extension. This Aspergillus clavatus (strain ATCC 1007 / CBS 513.65 / DSM 816 / NCTC 3887 / NRRL 1 / QM 1276 / 107) protein is Putative lipase atg15 (atg15).